A 208-amino-acid chain; its full sequence is Ribosomal RNA large subunit methyltransferase E (208 aa).

Positions 62, 64, 82, 98, and 123 each coordinate S-adenosyl-L-methionine. Catalysis depends on K163, which acts as the Proton acceptor.

Belongs to the class I-like SAM-binding methyltransferase superfamily. RNA methyltransferase RlmE family.

It localises to the cytoplasm. The enzyme catalyses uridine(2552) in 23S rRNA + S-adenosyl-L-methionine = 2'-O-methyluridine(2552) in 23S rRNA + S-adenosyl-L-homocysteine + H(+). Specifically methylates the uridine in position 2552 of 23S rRNA at the 2'-O position of the ribose in the fully assembled 50S ribosomal subunit. This Edwardsiella ictaluri (strain 93-146) protein is Ribosomal RNA large subunit methyltransferase E.